Reading from the N-terminus, the 259-residue chain is Thiazole synthase (259 aa).

Lysine 95 serves as the catalytic Schiff-base intermediate with DXP. 1-deoxy-D-xylulose 5-phosphate-binding positions include glycine 156, 182–183 (AG), and 204–205 (NT).

The protein belongs to the ThiG family. In terms of assembly, homotetramer. Forms heterodimers with either ThiH or ThiS.

The protein localises to the cytoplasm. It catalyses the reaction [ThiS sulfur-carrier protein]-C-terminal-Gly-aminoethanethioate + 2-iminoacetate + 1-deoxy-D-xylulose 5-phosphate = [ThiS sulfur-carrier protein]-C-terminal Gly-Gly + 2-[(2R,5Z)-2-carboxy-4-methylthiazol-5(2H)-ylidene]ethyl phosphate + 2 H2O + H(+). It participates in cofactor biosynthesis; thiamine diphosphate biosynthesis. Catalyzes the rearrangement of 1-deoxy-D-xylulose 5-phosphate (DXP) to produce the thiazole phosphate moiety of thiamine. Sulfur is provided by the thiocarboxylate moiety of the carrier protein ThiS. In vitro, sulfur can be provided by H(2)S. This is Thiazole synthase from Baumannia cicadellinicola subsp. Homalodisca coagulata.